A 531-amino-acid polypeptide reads, in one-letter code: Cytosolic Fe-S cluster assembly factor NAR1 (531 aa).

Residues Cys20, Cys72, Cys75, Cys78, Cys184, and Cys239 each coordinate [4Fe-4S] cluster. The disordered stretch occupies residues 395–426; the sequence is TSSTTTTKTNPLVARRKARLSSKRSESGAQDV. [4Fe-4S] cluster is bound by residues Cys442 and Cys446.

This sequence belongs to the NARF family.

Its function is as follows. Component of the cytosolic Fe/S protein assembly machinery. Required for maturation of extramitochondrial Fe/S proteins. May play a role in the transfer of pre-assembled Fe/S clusters to target apoproteins. The polypeptide is Cytosolic Fe-S cluster assembly factor NAR1 (NAR1) (Meyerozyma guilliermondii (strain ATCC 6260 / CBS 566 / DSM 6381 / JCM 1539 / NBRC 10279 / NRRL Y-324) (Yeast)).